A 324-amino-acid polypeptide reads, in one-letter code: UDP-N-acetylenolpyruvoylglucosamine reductase (324 aa).

The FAD-binding PCMH-type domain occupies 36–203 (FRAGGLAELM…THAIFEGYAE (168 aa)). Arg-183 is a catalytic residue. Catalysis depends on Ser-232, which acts as the Proton donor. Residue Glu-302 is part of the active site.

This sequence belongs to the MurB family. FAD serves as cofactor.

It localises to the cytoplasm. The enzyme catalyses UDP-N-acetyl-alpha-D-muramate + NADP(+) = UDP-N-acetyl-3-O-(1-carboxyvinyl)-alpha-D-glucosamine + NADPH + H(+). Its pathway is cell wall biogenesis; peptidoglycan biosynthesis. Functionally, cell wall formation. This chain is UDP-N-acetylenolpyruvoylglucosamine reductase, found in Rhizobium meliloti (strain 1021) (Ensifer meliloti).